Reading from the N-terminus, the 377-residue chain is Chaperone protein DnaJ (377 aa).

The J domain maps to 5–69; sequence DYYEVLGVSK…NKRANYDQFG (65 aa). The CR-type zinc-finger motif lies at 134-216; it reads GTEKEISIRK…CHGKGTETKN (83 aa). Residues C147, C150, C164, C167, C190, C193, C204, and C207 each contribute to the Zn(2+) site. CXXCXGXG motif repeat units follow at residues 147 to 154, 164 to 171, 190 to 197, and 204 to 211; these read CETCDGSG, CHYCNGSG, CPVCNGTG, and CPTCHGKG.

The protein belongs to the DnaJ family. Homodimer. The cofactor is Zn(2+).

It localises to the cytoplasm. In terms of biological role, participates actively in the response to hyperosmotic and heat shock by preventing the aggregation of stress-denatured proteins and by disaggregating proteins, also in an autonomous, DnaK-independent fashion. Unfolded proteins bind initially to DnaJ; upon interaction with the DnaJ-bound protein, DnaK hydrolyzes its bound ATP, resulting in the formation of a stable complex. GrpE releases ADP from DnaK; ATP binding to DnaK triggers the release of the substrate protein, thus completing the reaction cycle. Several rounds of ATP-dependent interactions between DnaJ, DnaK and GrpE are required for fully efficient folding. Also involved, together with DnaK and GrpE, in the DNA replication of plasmids through activation of initiation proteins. This chain is Chaperone protein DnaJ, found in Staphylococcus carnosus (strain TM300).